Here is a 283-residue protein sequence, read N- to C-terminus: uncharacterized protein (283 aa).

3 helical membrane-spanning segments follow: residues 24–44 (LFGYVINLTSAIIILISGMFI), 64–84 (TIAGFLSALMRYIIITFTLIA), and 96–116 (VIAILGAAGMAIGLALQGSLS).

The protein belongs to the MscS (TC 1.A.23) family.

It is found in the cell membrane. This is an uncharacterized protein from Buchnera aphidicola subsp. Schizaphis graminum (strain Sg).